A 271-amino-acid polypeptide reads, in one-letter code: NADPH-dependent 7-cyano-7-deazaguanine reductase (271 aa).

81–83 is a substrate binding site; that stretch reads IES. Residue 83–84 coordinates NADPH; it reads SK. Cys-177 functions as the Thioimide intermediate in the catalytic mechanism. Catalysis depends on Asp-184, which acts as the Proton donor. 216–217 contacts substrate; that stretch reads HE. An NADPH-binding site is contributed by 245-246; sequence RG.

The protein belongs to the GTP cyclohydrolase I family. QueF type 2 subfamily. In terms of assembly, homodimer.

The protein resides in the cytoplasm. It catalyses the reaction 7-aminomethyl-7-carbaguanine + 2 NADP(+) = 7-cyano-7-deazaguanine + 2 NADPH + 3 H(+). The protein operates within tRNA modification; tRNA-queuosine biosynthesis. Its function is as follows. Catalyzes the NADPH-dependent reduction of 7-cyano-7-deazaguanine (preQ0) to 7-aminomethyl-7-deazaguanine (preQ1). The protein is NADPH-dependent 7-cyano-7-deazaguanine reductase of Xanthomonas oryzae pv. oryzae (strain MAFF 311018).